The sequence spans 439 residues: Prenyltransferase iacE (439 aa).

Residues 88-89 (WI), Glu97, Arg112, Lys198, Tyr200, Arg271, Lys273, and Tyr275 each bind substrate.

The protein belongs to the tryptophan dimethylallyltransferase family.

It carries out the reaction siccayne + dimethylallyl diphosphate = pestalodiol + diphosphate. The protein operates within secondary metabolite biosynthesis. Its function is as follows. Prenyltransferase; part of the gene cluster that mediates the biosynthesis of iso-A82775C, a enylepoxycyclohexane and biosynthetic precursor of the chloropestolide anticancer natural products. Within the cluster, the prenyltransferase iacE prenylates siccayne to generate pestalodiol E, using dimethylallyl diphosphate (DMAPP) as cosubstrate. The probable oxidoreductase iacF is then involved in the epoxidation of pestalodiol F to pestalodiol F, which is further converted to pestalofone A by the short-chain dehydrogenase/reductase iacG. Iso-A82775C is subsequently generated from pestalofone A by the short-chain dehydrogenase/reductase iacC. Iso-A82775C is further condensed with maldoxin via a Diels-Alder reaction to produce the anticancer natural products chloropestolides A to E. This Pestalotiopsis fici (strain W106-1 / CGMCC3.15140) protein is Prenyltransferase iacE.